Reading from the N-terminus, the 259-residue chain is MVTMKDLLECGVHFGHQTRRWNPKMKKYIFGVRKNIYIIDLQKTLRYFRNTYTIVMDAAAEGKTVLFVGTKKQARASVRDAAIACGMPYVDNRWLGGMLTNFPTIQKSIRKLDVISEMQENGQIDLLTKKEALMLSRQKEKLESYFGGIRNMKKLPDMLFVMDAVKEHIAVLEARCLGIPVVAPLDTNCDPDLITYPIPGNDDAIRSIQLFCREMTEAINEGKALRSGGRDEIVAEDSEEVSTVDADAITAEDFETEEV.

A disordered region spans residues 234-259 (VAEDSEEVSTVDADAITAEDFETEEV). The span at 250–259 (TAEDFETEEV) shows a compositional bias: acidic residues.

This sequence belongs to the universal ribosomal protein uS2 family.

The polypeptide is Small ribosomal subunit protein uS2 (Sulfurimonas denitrificans (strain ATCC 33889 / DSM 1251) (Thiomicrospira denitrificans (strain ATCC 33889 / DSM 1251))).